The chain runs to 197 residues: Nucleoside triphosphate pyrophosphatase (197 aa).

The active-site Proton acceptor is D71.

The protein belongs to the Maf family. The cofactor is a divalent metal cation.

Its subcellular location is the cytoplasm. The catalysed reaction is a ribonucleoside 5'-triphosphate + H2O = a ribonucleoside 5'-phosphate + diphosphate + H(+). It carries out the reaction a 2'-deoxyribonucleoside 5'-triphosphate + H2O = a 2'-deoxyribonucleoside 5'-phosphate + diphosphate + H(+). Nucleoside triphosphate pyrophosphatase. May have a dual role in cell division arrest and in preventing the incorporation of modified nucleotides into cellular nucleic acids. In Trichormus variabilis (strain ATCC 29413 / PCC 7937) (Anabaena variabilis), this protein is Nucleoside triphosphate pyrophosphatase.